The following is a 376-amino-acid chain: MKVLTVFGTRPEAIKMAPLVHALEKDPHFEAKVCVTAQHREMLDQVLTLFSIVPDYDLNIMQPGQGLTEITCRILEGLKPILADFKPDVVLVHGDTTTTIATSLAAFYQRIPVGHVEAGLRTGDLYSPWPEEANRTLTGHLAMYHFAPTENSRQNLLRENIPDERIFVTGNTVIDALIWVRDRVLTSDTLQAELAEQYPFLNANKKMILVTGHRRESFGQGFEHICQALAEIAAANQNVQIVYPVHLNPNVSEPVNRILGHVENVVLIEPQDYLPFVWLMNHAWLILTDSGGIQEEAPSLGKPVLVMRETTERPEAITAGTVRLIGTDSRRIVAEVMRLLHDENEYQTMSRAHNPYGDGQSCARILQALKSYRVSL.

Substrate is bound by residues Arg10, Lys15, Asp95, Glu117, His213, Gln271, Phe276, Ser290–Gly292, Glu296, and Arg313.

This sequence belongs to the UDP-N-acetylglucosamine 2-epimerase family. In terms of assembly, homodimer.

It is found in the cytoplasm. The enzyme catalyses UDP-N-acetyl-alpha-D-glucosamine = UDP-N-acetyl-alpha-D-mannosamine. The protein operates within bacterial outer membrane biogenesis; enterobacterial common antigen biosynthesis. Its function is as follows. Catalyzes the reversible epimerization at C-2 of UDP-N-acetylglucosamine (UDP-GlcNAc) and thereby provides bacteria with UDP-N-acetylmannosamine (UDP-ManNAc), the activated donor of ManNAc residues. The protein is UDP-N-acetylglucosamine 2-epimerase of Salmonella typhimurium (strain LT2 / SGSC1412 / ATCC 700720).